The chain runs to 72 residues: uncharacterized protein (72 aa).

A helical transmembrane segment spans residues 46–66 (AIFVFNLCFIPNLCVACIFNV).

It is found in the membrane. This is an uncharacterized protein from Saccharomyces cerevisiae (strain ATCC 204508 / S288c) (Baker's yeast).